Here is a 307-residue protein sequence, read N- to C-terminus: 1-phosphofructokinase (307 aa).

ATP contacts are provided by residues 217–222 and 249–250; these read SMGSDG and GD. Catalysis depends on Asp-250, which acts as the Proton acceptor.

Belongs to the carbohydrate kinase PfkB family.

The catalysed reaction is beta-D-fructose 1-phosphate + ATP = beta-D-fructose 1,6-bisphosphate + ADP + H(+). Its function is as follows. Catalyzes the ATP-dependent phosphorylation of fructose-l-phosphate to fructose-l,6-bisphosphate. This Borreliella burgdorferi (strain ATCC 35210 / DSM 4680 / CIP 102532 / B31) (Borrelia burgdorferi) protein is 1-phosphofructokinase (fruK).